The sequence spans 202 residues: MRLIVGLGNPGARYAGNRHNIGFLAVDAIARQHRASPFRHRFQGEAAEVVLGTERAILLKPSTFMNESGRAVSEAQRFYKIPLADVIVLHDELDLAPAKLRVKRGGGNAGHNGLRSITAQCGNDYRRVRLGIGHPGDKALVHAYVLNDFGKAELPWVEDLCRAVADHAALLAAGEDASFQNKVHLAMAGRGWDDVKTLGARN.

Tyr14 provides a ligand contact to tRNA. The active-site Proton acceptor is the His19. Residues Phe64, Asn66, and Asn112 each coordinate tRNA.

It belongs to the PTH family. As to quaternary structure, monomer.

It localises to the cytoplasm. It carries out the reaction an N-acyl-L-alpha-aminoacyl-tRNA + H2O = an N-acyl-L-amino acid + a tRNA + H(+). Its function is as follows. Hydrolyzes ribosome-free peptidyl-tRNAs (with 1 or more amino acids incorporated), which drop off the ribosome during protein synthesis, or as a result of ribosome stalling. In terms of biological role, catalyzes the release of premature peptidyl moieties from peptidyl-tRNA molecules trapped in stalled 50S ribosomal subunits, and thus maintains levels of free tRNAs and 50S ribosomes. The sequence is that of Peptidyl-tRNA hydrolase from Methylobacterium radiotolerans (strain ATCC 27329 / DSM 1819 / JCM 2831 / NBRC 15690 / NCIMB 10815 / 0-1).